Reading from the N-terminus, the 288-residue chain is Oxaloacetate decarboxylase (288 aa).

Residue S47 coordinates substrate. Residue D85 participates in Mg(2+) binding. Residues R156 and H232 each coordinate substrate.

It belongs to the isocitrate lyase/PEP mutase superfamily. Oxaloacetate decarboxylase family. In terms of assembly, homotetramer; dimer of dimers. It depends on Mg(2+) as a cofactor.

The enzyme catalyses oxaloacetate + H(+) = pyruvate + CO2. Its function is as follows. Catalyzes the decarboxylation of oxaloacetate into pyruvate. Seems to play a role in maintaining cellular concentrations of bicarbonate and pyruvate. This Rhodopseudomonas palustris (strain TIE-1) protein is Oxaloacetate decarboxylase.